A 411-amino-acid chain; its full sequence is Imidazolonepropionase (411 aa).

The Fe(3+) site is built by His75 and His77. Zn(2+) contacts are provided by His75 and His77. Residues Arg84, Tyr147, and His180 each coordinate 4-imidazolone-5-propanoate. N-formimidoyl-L-glutamate is bound at residue Tyr147. His245 contacts Fe(3+). His245 lines the Zn(2+) pocket. Residue Gln248 coordinates 4-imidazolone-5-propanoate. Residue Asp320 coordinates Fe(3+). Residue Asp320 coordinates Zn(2+). Asn322 and Gly324 together coordinate N-formimidoyl-L-glutamate. Thr325 contacts 4-imidazolone-5-propanoate.

It belongs to the metallo-dependent hydrolases superfamily. HutI family. It depends on Zn(2+) as a cofactor. Fe(3+) is required as a cofactor.

The protein resides in the cytoplasm. The enzyme catalyses 4-imidazolone-5-propanoate + H2O = N-formimidoyl-L-glutamate. Its pathway is amino-acid degradation; L-histidine degradation into L-glutamate; N-formimidoyl-L-glutamate from L-histidine: step 3/3. In terms of biological role, catalyzes the hydrolytic cleavage of the carbon-nitrogen bond in imidazolone-5-propanoate to yield N-formimidoyl-L-glutamate. It is the third step in the universal histidine degradation pathway. The chain is Imidazolonepropionase from Aeromonas salmonicida (strain A449).